Consider the following 2111-residue polypeptide: Glutamate synthase [NADH] (2111 aa).

The active-site Nucleophile is the Cys69. Residues 69–469 (CGVGFTCHIK…PGRMLLVDTK (401 aa)) form the Glutamine amidotransferase type-2 domain. Residues 969–990 (GGKSNTGEGGEDPARSQRLANG) form a disordered region. 1139–1191 (VAETHQTLVLNDLRGRVVIQTDGQIRTGRDVAIACLLGAEEWGFATTPLIALG) contacts FMN. 3 residues coordinate [3Fe-4S] cluster: Cys1192, Cys1198, and Cys1203.

The protein belongs to the glutamate synthase family. As to quaternary structure, homotrimer. [3Fe-4S] cluster is required as a cofactor. FAD serves as cofactor. Requires FMN as cofactor.

It localises to the cytoplasm. The catalysed reaction is 2 L-glutamate + NAD(+) = L-glutamine + 2-oxoglutarate + NADH + H(+). The protein operates within amino-acid biosynthesis; L-glutamate biosynthesis via GLT pathway; L-glutamate from 2-oxoglutarate and L-glutamine (NAD(+) route): step 1/1. Its pathway is energy metabolism; nitrogen metabolism. Its activity is regulated as follows. In the presence of 10 mM allantoin, the activity is reduced more than 25%. Functionally, forms L-glutamate from L-glutamine and 2-oxoglutarate. Represents an alternative pathway to L-glutamate dehydrogenase for the biosynthesis of L-glutamate. Participates with glutamine synthetase in ammonia assimilation processes. The enzyme is specific for NADH, L-glutamine and 2-oxoglutarate. The protein is Glutamate synthase [NADH] (glt1) of Schizosaccharomyces pombe (strain 972 / ATCC 24843) (Fission yeast).